We begin with the raw amino-acid sequence, 610 residues long: UvrABC system protein C (610 aa).

A GIY-YIG domain is found at 13-92; the sequence is TLPGVYLMKN…IKQHKPRYNA (80 aa). A UVR domain is found at 204–239; it reads KDVLKDLYEEMRLLSEQLEFEKANHLLRTIRYIEKT.

It belongs to the UvrC family. As to quaternary structure, interacts with UvrB in an incision complex.

The protein localises to the cytoplasm. The UvrABC repair system catalyzes the recognition and processing of DNA lesions. UvrC both incises the 5' and 3' sides of the lesion. The N-terminal half is responsible for the 3' incision and the C-terminal half is responsible for the 5' incision. The polypeptide is UvrABC system protein C (Protochlamydia amoebophila (strain UWE25)).